Here is a 163-residue protein sequence, read N- to C-terminus: Phosphopantetheine adenylyltransferase (163 aa).

Residue T10 participates in substrate binding. ATP-binding positions include 10–11 (TF) and H18. Substrate contacts are provided by K42, L74, and R88. ATP-binding positions include 89–91 (GLR), E99, and 124–130 (NSFISST).

The protein belongs to the bacterial CoaD family. In terms of assembly, homohexamer. Mg(2+) is required as a cofactor.

It is found in the cytoplasm. It catalyses the reaction (R)-4'-phosphopantetheine + ATP + H(+) = 3'-dephospho-CoA + diphosphate. The protein operates within cofactor biosynthesis; coenzyme A biosynthesis; CoA from (R)-pantothenate: step 4/5. Functionally, reversibly transfers an adenylyl group from ATP to 4'-phosphopantetheine, yielding dephospho-CoA (dPCoA) and pyrophosphate. The chain is Phosphopantetheine adenylyltransferase from Shewanella sp. (strain W3-18-1).